The chain runs to 739 residues: Catalase-peroxidase 2 (739 aa).

A signal peptide spans 1–26 (MKKTTIPTLSALTLAMSLAFGGAAIA). A cross-link (tryptophyl-tyrosyl-methioninium (Trp-Tyr) (with M-253)) is located at residues 105–227 (WHSAGVYRIF…MGATQMGLIY (123 aa)). H106 acts as the Proton acceptor in catalysis. The segment at residues 227-253 (YVNPEGPNGVPDPLASAKEIRDTFGRM) is a cross-link (tryptophyl-tyrosyl-methioninium (Tyr-Met) (with W-105)). H268 serves as a coordination point for heme b.

This sequence belongs to the peroxidase family. Peroxidase/catalase subfamily. In terms of assembly, homodimer or homotetramer. The cofactor is heme b. Formation of the three residue Trp-Tyr-Met cross-link is important for the catalase, but not the peroxidase activity of the enzyme.

It carries out the reaction H2O2 + AH2 = A + 2 H2O. The catalysed reaction is 2 H2O2 = O2 + 2 H2O. Functionally, bifunctional enzyme with both catalase and broad-spectrum peroxidase activity. In Shewanella sp. (strain MR-4), this protein is Catalase-peroxidase 2.